Consider the following 456-residue polypeptide: Decaprenyl-diphosphate synthase (456 aa).

Residues Lys-183, Arg-186, and His-216 each contribute to the isopentenyl diphosphate site. Positions 223 and 227 each coordinate Mg(2+). Isopentenyl diphosphate is bound at residue Arg-233.

It belongs to the FPP/GGPP synthase family. Requires Mg(2+) as cofactor.

It is found in the mitochondrion. It catalyses the reaction 7 isopentenyl diphosphate + (2E,6E)-farnesyl diphosphate = all-trans-decaprenyl diphosphate + 7 diphosphate. The protein operates within cofactor biosynthesis; ubiquinone biosynthesis. Supplies decaprenyl diphosphate, the precursor for the side chain of the isoprenoid quinones ubiquinone-10. The sequence is that of Decaprenyl-diphosphate synthase (coq1) from Dictyostelium discoideum (Social amoeba).